The chain runs to 245 residues: Thiopurine S-methyltransferase (245 aa).

Position 14 is a phosphoserine (Ser-14). 29 to 40 (WQDKWVNGKTAF) provides a ligand contact to S-adenosyl-L-methionine. Phe-40 is a substrate binding site. An N6-acetyllysine modification is found at Lys-58. Residues Leu-69, Glu-90, 134–135 (SI), and Arg-152 contribute to the S-adenosyl-L-methionine site.

The protein belongs to the class I-like SAM-binding methyltransferase superfamily. TPMT family. Monomer.

Its subcellular location is the cytoplasm. It catalyses the reaction S-adenosyl-L-methionine + a thiopurine = S-adenosyl-L-homocysteine + a thiopurine S-methylether.. The catalysed reaction is mercaptopurine + S-adenosyl-L-methionine = 6-methylthiopurine + S-adenosyl-L-homocysteine + H(+). It carries out the reaction 6-thioguanine + S-adenosyl-L-methionine = 6-methylthioguanine + S-adenosyl-L-homocysteine + H(+). With respect to regulation, inhibited by S-adenosyl-L-homocysteine (SAH). In terms of biological role, catalyzes the S-methylation of thiopurine drugs such as 6-mercaptopurine (also called mercaptopurine, 6-MP or its brand name Purinethol) and 6-thioguanine (also called tioguanine or 6-TG) using S-adenosyl-L-methionine as the methyl donor. TPMT activity modulates the cytotoxic effects of thiopurine prodrugs. A natural substrate for this enzyme has yet to be identified. This Homo sapiens (Human) protein is Thiopurine S-methyltransferase (TPMT).